We begin with the raw amino-acid sequence, 261 residues long: tRNA pseudouridine synthase A (261 aa).

Aspartate 51 (nucleophile) is an active-site residue. Tyrosine 109 lines the substrate pocket.

The protein belongs to the tRNA pseudouridine synthase TruA family. As to quaternary structure, homodimer.

The catalysed reaction is uridine(38/39/40) in tRNA = pseudouridine(38/39/40) in tRNA. Formation of pseudouridine at positions 38, 39 and 40 in the anticodon stem and loop of transfer RNAs. This chain is tRNA pseudouridine synthase A, found in Photobacterium profundum (strain SS9).